The following is a 336-amino-acid chain: tRNA N6-adenosine threonylcarbamoyltransferase (336 aa).

3 residues coordinate Fe cation: His111, His115, and Tyr132. Substrate contacts are provided by residues 132-136 (YLSGG), Asp164, Asp185, and Ser264. Asp292 contributes to the Fe cation binding site.

Belongs to the KAE1 / TsaD family. It depends on Fe(2+) as a cofactor.

The protein localises to the cytoplasm. It carries out the reaction L-threonylcarbamoyladenylate + adenosine(37) in tRNA = N(6)-L-threonylcarbamoyladenosine(37) in tRNA + AMP + H(+). Required for the formation of a threonylcarbamoyl group on adenosine at position 37 (t(6)A37) in tRNAs that read codons beginning with adenine. Is probably involved in the transfer of the threonylcarbamoyl moiety of threonylcarbamoyl-AMP (TC-AMP) to the N6 group of A37. In Sulfurisphaera tokodaii (strain DSM 16993 / JCM 10545 / NBRC 100140 / 7) (Sulfolobus tokodaii), this protein is tRNA N6-adenosine threonylcarbamoyltransferase.